The primary structure comprises 509 residues: O-acetyltransferase anaAT (509 aa).

This sequence belongs to the fumigaclavine B O-acetyltransferase family. In terms of assembly, monomer.

The catalysed reaction is (2R,3S,11R)-aszonalenin + acetyl-CoA = (2R,3S,11R)-acetylaszonalenin + CoA. It participates in alkaloid biosynthesis. Its function is as follows. O-acetyltransferase; part of the gene cluster that mediates the biosynthesis of the prenylated pyrroloindoline diketopiperazine acetylaszonalenin. The first step in the pathway is the formation of (R)-benzodiazepinedione by condensation of tryptophan and anthranilic acid catalyzed by the non-ribosomal peptide synthetase anaPS. The prenyltransferase anaPT then converts (R)-benzodiazepinedione to aszonalenin in the presence of dimethylallyl diphosphate (DMAPP) via C3-prenylation. The last step in the biosynthesis of acetylaszonalenin via acetylation of aszonalenin at position N1 catalyzed by anaAT. The chain is O-acetyltransferase anaAT from Neosartorya fischeri (strain ATCC 1020 / DSM 3700 / CBS 544.65 / FGSC A1164 / JCM 1740 / NRRL 181 / WB 181) (Aspergillus fischerianus).